We begin with the raw amino-acid sequence, 115 residues long: Nucleoid-associated protein P9211_00201 (115 aa).

The protein belongs to the YbaB/EbfC family. As to quaternary structure, homodimer.

The protein resides in the cytoplasm. It is found in the nucleoid. Binds to DNA and alters its conformation. May be involved in regulation of gene expression, nucleoid organization and DNA protection. This chain is Nucleoid-associated protein P9211_00201, found in Prochlorococcus marinus (strain MIT 9211).